The chain runs to 327 residues: Interleukin-12 subunit beta (327 aa).

A signal peptide spans 1–22 (MCHQKLTISWFAMVLLVSPLMA). The Ig-like C2-type domain maps to 23 to 106 (IWELEKDVYV…LSHSRLLLHK (84 aa)). C50 and C90 are disulfide-bonded. 4 N-linked (GlcNAc...) asparagine glycosylation sites follow: N125, N135, N223, and N315. Positions 238 to 327 (PPKNLQLKPL…WSEWASVSCN (90 aa)) constitute a Fibronectin type-III domain.

Belongs to the IL-12B family. As to quaternary structure, heterodimer with IL12A; disulfide-linked. The heterodimer is known as interleukin IL-12. Heterodimer with IL23A; disulfide-linked. The heterodimer is known as interleukin IL-23. Also secreted as a monomer. Interacts with NBR1; this interaction promotes IL-12 secretion.

Its subcellular location is the secreted. Functionally, cytokine that can act as a growth factor for activated T and NK cells, enhance the lytic activity of NK/lymphokine-activated killer cells, and stimulate the production of IFN-gamma by resting PBMC. In terms of biological role, associates with IL23A to form the IL-23 interleukin, a heterodimeric cytokine which functions in innate and adaptive immunity. IL-23 may constitute with IL-17 an acute response to infection in peripheral tissues. IL-23 binds to a heterodimeric receptor complex composed of IL12RB1 and IL23R, activates the Jak-Stat signaling cascade, stimulates memory rather than naive T-cells and promotes production of pro-inflammatory cytokines. IL-23 induces autoimmune inflammation and thus may be responsible for autoimmune inflammatory diseases and may be important for tumorigenesis. The protein is Interleukin-12 subunit beta (IL12B) of Sigmodon hispidus (Hispid cotton rat).